Consider the following 293-residue polypeptide: 4-hydroxy-tetrahydrodipicolinate synthase (293 aa).

Thr-45 provides a ligand contact to pyruvate. Tyr-133 functions as the Proton donor/acceptor in the catalytic mechanism. Catalysis depends on Lys-161, which acts as the Schiff-base intermediate with substrate. Residue Ile-204 coordinates pyruvate.

It belongs to the DapA family. Homotetramer; dimer of dimers.

It is found in the cytoplasm. It catalyses the reaction L-aspartate 4-semialdehyde + pyruvate = (2S,4S)-4-hydroxy-2,3,4,5-tetrahydrodipicolinate + H2O + H(+). It functions in the pathway amino-acid biosynthesis; L-lysine biosynthesis via DAP pathway; (S)-tetrahydrodipicolinate from L-aspartate: step 3/4. In terms of biological role, catalyzes the condensation of (S)-aspartate-beta-semialdehyde [(S)-ASA] and pyruvate to 4-hydroxy-tetrahydrodipicolinate (HTPA). The sequence is that of 4-hydroxy-tetrahydrodipicolinate synthase from Yersinia pseudotuberculosis serotype O:1b (strain IP 31758).